Reading from the N-terminus, the 349-residue chain is Threonine-rich protein (349 aa).

The signal sequence occupies residues 1 to 19 (MKGLTLACIAATVVAASHA). N257 carries N-linked (GlcNAc...) asparagine glycosylation. Residues 300 to 326 (QPDVSPMSVRKRRQAESAEEDDDLVGD) form a disordered region. Over residues 316–326 (SAEEDDDLVGD) the composition is skewed to acidic residues. Positions 316–349 (SAEEDDDLVGDMEDLKELEQEIQEALEEVEKLDV) form a coiled coil.

In terms of tissue distribution, component of the acid-insoluble and acid-soluble organic matrix of calcified layers of the shell (at protein level).

Its subcellular location is the secreted. The chain is Threonine-rich protein from Lottia gigantea (Giant owl limpet).